The following is a 217-amino-acid chain: Large ribosomal subunit protein bL25 (217 aa).

The tract at residues 185–217 (TKETVEDEEAEEAAAEGAEETGETGETEEGGDE) is disordered. The span at 189 to 217 (VEDEEAEEAAAEGAEETGETGETEEGGDE) shows a compositional bias: acidic residues.

This sequence belongs to the bacterial ribosomal protein bL25 family. CTC subfamily. Part of the 50S ribosomal subunit; part of the 5S rRNA/L5/L18/L25 subcomplex. Contacts the 5S rRNA. Binds to the 5S rRNA independently of L5 and L18.

Functionally, this is one of the proteins that binds to the 5S RNA in the ribosome where it forms part of the central protuberance. The chain is Large ribosomal subunit protein bL25 from Desulfosudis oleivorans (strain DSM 6200 / JCM 39069 / Hxd3) (Desulfococcus oleovorans).